The primary structure comprises 410 residues: Probable serine/threonine-protein kinase PBL9 (410 aa).

G2 carries the N-myristoyl glycine lipid modification. The S-palmitoyl cysteine moiety is linked to residue C4. Residues 11-46 form a disordered region; sequence AESSGASTKYDAKDIGSLGSKASSVSVRPSPRTEGE. The Protein kinase domain maps to 68 to 352; it reads FRPDSVLGEG…MSEVVSHLEH (285 aa). Residues 74 to 82 and K106 each bind ATP; that span reads LGEGGFGCV. At Y151 the chain carries Phosphotyrosine. The active-site Proton acceptor is D203. Phosphoserine is present on residues S207 and S237. 2 positions are modified to phosphothreonine: T238 and T243. Y251 is subject to Phosphotyrosine.

Belongs to the protein kinase superfamily. Ser/Thr protein kinase family. As to quaternary structure, interacts with the Xanthomonas campestris effector XopAC/AvrAC. As to expression, expressed in stomatal guard cells of leaves.

Its subcellular location is the cell membrane. It carries out the reaction L-seryl-[protein] + ATP = O-phospho-L-seryl-[protein] + ADP + H(+). It catalyses the reaction L-threonyl-[protein] + ATP = O-phospho-L-threonyl-[protein] + ADP + H(+). Possible bi-functional kinase. In vitro, it exhibits serine/threonine activity. In vivo, can phosphorylate tyrosine residues of limited substrates. May be involved in plant defense signaling. This chain is Probable serine/threonine-protein kinase PBL9, found in Arabidopsis thaliana (Mouse-ear cress).